Consider the following 153-residue polypeptide: D-amino acid oxidase regulator (153 aa).

Residues 1–25 (MLEKLMGADSLQLFRSRYTLGKIYF) form an involved in targeting to the mitochondrion region. The segment at 138 to 153 (KDQSCNHKEITSTKAE) is interaction with DAO.

As to quaternary structure, interacts with DAO (D-amino acid oxidase); the interaction is direct, can occur in the presence or absence of FAD or substrate bound to DAO, and results in a complex containing two DAO homodimers and two DAOA monomers. Interacts with DDO (D-aspartate oxidase); the interaction is direct. Interacts wih SOD1; the interaction is direct. Interacts with MSRB2; the interaction is direct. Expressed in the amygdala and in astrocytes of the cortex (at protein level). Expressed in the caudate nucleus, spinal cord and testis.

It localises to the cytoplasm. Its subcellular location is the cytosol. The protein localises to the golgi apparatus. The protein resides in the mitochondrion. May suppress DAO (D-amino acid oxidase) and SOD1 activity and promote their degradation. Has conversely also been suggested to function as a DAO activator. May stimulate the degradation of DDO (D-aspartate oxidase). May play a role in mitochondrial fission. This is D-amino acid oxidase regulator (DAOA) from Homo sapiens (Human).